Reading from the N-terminus, the 113-residue chain is Nucleoid-associated protein THA_1374 (113 aa).

It belongs to the YbaB/EbfC family. In terms of assembly, homodimer.

It is found in the cytoplasm. The protein resides in the nucleoid. Its function is as follows. Binds to DNA and alters its conformation. May be involved in regulation of gene expression, nucleoid organization and DNA protection. The chain is Nucleoid-associated protein THA_1374 from Thermosipho africanus (strain TCF52B).